A 280-amino-acid chain; its full sequence is 3-methyl-2-oxobutanoate hydroxymethyltransferase (280 aa).

Residues D45 and D84 each contribute to the Mg(2+) site. 3-methyl-2-oxobutanoate is bound by residues 45 to 46 (DS), D84, and K114. E116 is a binding site for Mg(2+). The Proton acceptor role is filled by E183.

Belongs to the PanB family. In terms of assembly, homodecamer; pentamer of dimers. Mg(2+) is required as a cofactor.

It localises to the cytoplasm. It carries out the reaction 3-methyl-2-oxobutanoate + (6R)-5,10-methylene-5,6,7,8-tetrahydrofolate + H2O = 2-dehydropantoate + (6S)-5,6,7,8-tetrahydrofolate. It functions in the pathway cofactor biosynthesis; (R)-pantothenate biosynthesis; (R)-pantoate from 3-methyl-2-oxobutanoate: step 1/2. In terms of biological role, catalyzes the reversible reaction in which hydroxymethyl group from 5,10-methylenetetrahydrofolate is transferred onto alpha-ketoisovalerate to form ketopantoate. The chain is 3-methyl-2-oxobutanoate hydroxymethyltransferase from Clostridium kluyveri (strain ATCC 8527 / DSM 555 / NBRC 12016 / NCIMB 10680 / K1).